A 31-amino-acid chain; its full sequence is Delta-conotoxin-like ErVIA (31 aa).

Residues 1 to 4 (LNKR) constitute a propeptide that is removed on maturation. Cystine bridges form between Cys-5/Cys-21, Cys-12/Cys-25, and Cys-20/Cys-29.

Belongs to the conotoxin O1 superfamily. In terms of tissue distribution, expressed by the venom duct.

It localises to the secreted. Its function is as follows. This toxin activates voltage-gated sodium channels. It shifts the voltage-dependence of activation to more hyperpolarized potentials but has only little effect on channel inactivation. It is active on Nav1.3/SCN3A (EC(50)=3.98 nM), Nav1.4/SCN4A (EC(50)=4.99 nM), Nav1.6/SCN8A (EC(50)=1.27 nM) and Nav1.7/SCN9A (EC(50)=2.42 nM) voltage-gated sodium channels. In vivo, it induces nocifensive or pain-like behaviors in mice when injected intraplantarly. This is Delta-conotoxin-like ErVIA from Conus eburneus (Ivory cone).